The following is a 1430-amino-acid chain: Transport and Golgi organization protein 1 (1430 aa).

The signal sequence occupies residues 1 to 34 (MRLTNEKATMQPQLSDLALVLGLLICCLPTLTWA). Residues 35–796 (ATLSDKRLCA…ADKLVDHSQL (762 aa)) lie on the Extracellular side of the membrane. Residues 50–112 (QIISMGIAKI…NKDFIMEKKI (63 aa)) enclose the SH3 domain. 5 disordered regions span residues 253–272 (QEEP…PPLP), 284–303 (DFDY…SQDN), 318–362 (ESIE…SLPT), 445–524 (SDAE…DQQK), and 568–673 (EEAE…TDNH). Acidic residues predominate over residues 284-296 (DFDYGDDETDDDS). Basic and acidic residues-rich tracts occupy residues 331-357 (KKTD…KQED), 497-524 (LQEE…DQQK), and 568-588 (EEAE…RSSE). A coiled-coil region spans residues 494-620 (YKQLQEEQEK…QSNEIVDNNN (127 aa)). The segment covering 594-621 (LSVQEANMQQLNDSVDSQSNEIVDNNNR) has biased composition (polar residues). Residues 640-651 (HPSTASHTTPTP) are compositionally biased toward low complexity. A helical transmembrane segment spans residues 797-817 (LLCVVIAAISSLFFMFAYYCF). Over 818–1430 (CNSSQEGALL…SATSRPYSEV (613 aa)) the chain is Cytoplasmic. 2 positions are modified to phosphoserine: serine 865 and serine 868. Positions 869 to 1245 (NDMVADLKKQ…SLRRKLTTMA (377 aa)) form a coiled coil. The segment covering 1105–1114 (SQLQQSSQDV) has biased composition (low complexity). Disordered regions lie at residues 1105–1126 (SQLQ…QSER) and 1312–1430 (LPPT…YSEV). Over residues 1115–1126 (EQLKQDFNQSER) the composition is skewed to basic and acidic residues. The span at 1321–1334 (RPPPLGRMRSPPPS) shows a compositional bias: pro residues. A compositionally biased stretch (basic and acidic residues) spans 1336–1346 (RGDRDRERYSD). Residues serine 1345 and serine 1348 each carry the phosphoserine modification. Residues 1348–1361 (SDYDDYDDDEEDDR) are compositionally biased toward acidic residues. The span at 1364-1380 (DRRRRHSGSWGRRHRGS) shows a compositional bias: basic residues. Polar residues predominate over residues 1387 to 1402 (TYRSLSPSDSRYNYND). Residues serine 1390 and serine 1392 each carry the phosphoserine modification. Residues 1408 to 1417 (SPPPSPPPVP) are compositionally biased toward pro residues. Polar residues predominate over residues 1420–1430 (RSATSRPYSEV).

Belongs to the MIA/OTOR family. Tango1 subfamily.

It is found in the golgi apparatus membrane. The protein localises to the golgi apparatus. The protein resides in the trans-Golgi network. Its function is as follows. Required for protein secretion. May participate in cargo loading by binding to COPII coat subunits and guiding SH3-bound proteins into a growing carrier. At basal transitional ER sites in follicle epithelial cells, mediates the exit of basal membrane protein such as vkg, LanB1 and Trol, from the endoplasmic reticulum (ER) to basal Golgi clusters. In Drosophila melanogaster (Fruit fly), this protein is Transport and Golgi organization protein 1.